Here is a 90-residue protein sequence, read N- to C-terminus: uncharacterized protein (90 aa).

The disordered stretch occupies residues 62–90 (RQLKKKQAYKPDPEASFSWSANTSTRGRR). A compositionally biased stretch (polar residues) spans 78 to 90 (FSWSANTSTRGRR).

This is an uncharacterized protein from Escherichia coli (strain K12).